Consider the following 117-residue polypeptide: Large ribosomal subunit protein bL20 (117 aa).

It belongs to the bacterial ribosomal protein bL20 family.

Binds directly to 23S ribosomal RNA and is necessary for the in vitro assembly process of the 50S ribosomal subunit. It is not involved in the protein synthesizing functions of that subunit. The protein is Large ribosomal subunit protein bL20 of Aliivibrio salmonicida (strain LFI1238) (Vibrio salmonicida (strain LFI1238)).